We begin with the raw amino-acid sequence, 313 residues long: Protease HtpX homolog (313 aa).

The next 2 membrane-spanning stretches (helical) occupy residues 7–24 (AMLL…GYLI) and 29–46 (GMMI…FSYW). His130 provides a ligand contact to Zn(2+). Residue Glu131 is part of the active site. His134 contributes to the Zn(2+) binding site. The next 2 helical transmembrane spans lie at 145-165 (ITAT…FFGG) and 172-192 (PFGF…AMVV). Residue Glu201 participates in Zn(2+) binding. The interval 282 to 313 (GNAPPASLREDEPGADGPWGRSASRARKGPWS) is disordered.

Belongs to the peptidase M48B family. Zn(2+) is required as a cofactor.

Its subcellular location is the cell inner membrane. The sequence is that of Protease HtpX homolog from Chelativorans sp. (strain BNC1).